A 427-amino-acid chain; its full sequence is Pseudouridylate synthase 1 homolog (427 aa).

Residues 20–83 form a disordered region; sequence GPRPSCSPRM…DEERREKPPK (64 aa). Positions 44–79 are enriched in basic and acidic residues; that stretch reads QDRRSCSGRAGGDRVWEDGEHPAKKLKSGGDEERRE. The Nucleophile role is filled by Asp146. A disordered region spans residues 407–427; the sequence is GGTGAKVPSPLEGSEGDGDTD. Phosphoserine is present on residues Ser415 and Ser420. The residue at position 426 (Thr426) is a Phosphothreonine.

It belongs to the tRNA pseudouridine synthase TruA family. In terms of assembly, monomer. Forms a complex with RARG and the SRA1 RNA in the nucleus. In terms of tissue distribution, widely expressed. High levels of expression found in brain and skeletal muscle.

The protein resides in the mitochondrion. It localises to the nucleus. Its subcellular location is the cytoplasm. The enzyme catalyses a uridine in tRNA = a pseudouridine in tRNA. It catalyses the reaction uridine(38/39/40) in tRNA = pseudouridine(38/39/40) in tRNA. It carries out the reaction a uridine in mRNA = a pseudouridine in mRNA. Functionally, pseudouridylate synthase that catalyzes pseudouridylation of tRNAs and mRNAs. Acts on positions 27/28 in the anticodon stem and also positions 34 and 36 in the anticodon of an intron containing tRNA. Also catalyzes pseudouridylation of mRNAs: mediates pseudouridylation of mRNAs with the consensus sequence 5'-UGUAG-3'. Acts as a regulator of pre-mRNA splicing by mediating pseudouridylation of pre-mRNAs at locations associated with alternatively spliced regions. Pseudouridylation of pre-mRNAs near splice sites directly regulates mRNA splicing and mRNA 3'-end processing. Involved in regulation of nuclear receptor activity through pseudouridylation of SRA1 mRNA. This chain is Pseudouridylate synthase 1 homolog, found in Homo sapiens (Human).